The chain runs to 691 residues: MSVPAQPAPGADGGDPRQPIRVPAGTTAAAAIGEAGLPRRGAPDAIVVVRDAEGKLRDLSWVPDADAEVTPIAANTDDGRSVIRHSTAHVLAQAVQDLFPQAKLGIGPPITDGFYYDFEVLEPFTPDDLQALEKRMRQIVKEGQLFDRRVFESKDQAREELANEPYKVELVDDKSGDPDVMEVGGDELTAYDNLNPRTRERVWGDLCRGPHISTTKHIPAFKLTRSSAAYWRGDQKNASLQRIYGTAWESQEALDTHIELIEEAQRRDHRKLGVELDLFSFPDEIGSGLAVFHPKGGIVRRELEDYSRRKHTEAGYQFVNSPHITKAQLFHTSGHLDWYADGMFPPMQIDAEYNTDGTVRKPGQDYYLKPMNCPMHCLIFRARGRSYRELPLRLFEFGTVYRYEKSGVVHGLTRVRGLTMDDAHIFCTREQMRDELRSLLRFVLDLLSDYGLTDFYLELSTKDPDKFVGSDEVWEEATNVLAEVGAESSLELVPDPGGAAFYGPKISVQVKDALGRTWQMSTIQLDFNFPERFGLEYTAADGTRQRPVMIHRALFGSIERFFGILTEHYAGAFPAWLAPVQAVGIPVADEHIAYLGQVAAQLKSHGVRVEVDTSDDRMAKKIVHHTNQKVPFMLLAGDRDVQADAVSFRFGDRTQINGVPREAAVAAIVDWISRRENATPTGELVKVDSGE.

Positions 1–22 (MSVPAQPAPGADGGDPRQPIRV) are disordered. Residues 1–73 (MSVPAQPAPG…DADAEVTPIA (73 aa)) form the TGS domain. Residues 268–574 (DHRKLGVELD…LTEHYAGAFP (307 aa)) form a catalytic region. Residues C373, H424, and H551 each coordinate Zn(2+).

The protein belongs to the class-II aminoacyl-tRNA synthetase family. Homodimer. It depends on Zn(2+) as a cofactor.

Its subcellular location is the cytoplasm. The enzyme catalyses tRNA(Thr) + L-threonine + ATP = L-threonyl-tRNA(Thr) + AMP + diphosphate + H(+). Its function is as follows. Catalyzes the attachment of threonine to tRNA(Thr) in a two-step reaction: L-threonine is first activated by ATP to form Thr-AMP and then transferred to the acceptor end of tRNA(Thr). Also edits incorrectly charged L-seryl-tRNA(Thr). This Mycobacterium ulcerans (strain Agy99) protein is Threonine--tRNA ligase.